We begin with the raw amino-acid sequence, 503 residues long: Cell wall integrity and stress response component 2 (503 aa).

A signal peptide spans 1–23 (MHLDLIHKSFILVWLIYIRAALA). The Extracellular segment spans residues 24-325 (DQFTYKACYS…KGLSGGAIAG (302 aa)). Residues 25–118 (QFTYKACYSA…SSAMNVYINN (94 aa)) form the WSC domain. A disordered region spans residues 124-260 (DSTSSTATST…STPSSTSIGT (137 aa)). A helical transmembrane segment spans residues 326–346 (VVVGVVCGTVALLALALFFFV). Residues 347–503 (WKKRRQSSQH…AKDSNNSSLR (157 aa)) are Cytoplasmic-facing. Residue Thr402 is modified to Phosphothreonine. Phosphoserine is present on residues Ser455 and Ser458. The segment at 470–503 (IVNPDNVSSNIGSNVSDGDDDYDDAKDSNNSSLR) is disordered.

N-glycosylated.

It localises to the cell membrane. The sequence is that of Cell wall integrity and stress response component 2 (WSC2) from Saccharomyces cerevisiae (strain ATCC 204508 / S288c) (Baker's yeast).